The following is a 380-amino-acid chain: Gap junction gamma-1 protein (380 aa).

Residues Met-1–Lys-22 lie on the Cytoplasmic side of the membrane. Residues Ile-23–Tyr-45 traverse the membrane as a helical segment. The Extracellular segment spans residues Asp-46–Arg-75. A helical membrane pass occupies residues Phe-76–Ala-95. Topologically, residues Met-96–Lys-171 are cytoplasmic. The helical transmembrane segment at Val-172–Leu-194 threads the bilayer. The Extracellular portion of the chain corresponds to Tyr-195–Leu-228. Residues Leu-229–Leu-251 traverse the membrane as a helical segment. Topologically, residues Ser-252 to Ala-380 are cytoplasmic. The tract at residues Ala-337–Ala-380 is disordered. Low complexity predominate over residues Glu-342–Ser-353. A compositionally biased stretch (polar residues) spans Asn-354–Lys-369. The segment covering Gln-370–Ala-380 has biased composition (basic and acidic residues).

Belongs to the connexin family. Gamma-type subfamily. In terms of assembly, a connexon is composed of a hexamer of connexins.

The protein resides in the cell membrane. It is found in the cell junction. Its subcellular location is the gap junction. One gap junction consists of a cluster of closely packed pairs of transmembrane channels, the connexons, through which materials of low MW diffuse from one cell to a neighboring cell. Participates in a developmental pathway for formation of the notochord and tail. The chain is Gap junction gamma-1 protein (gjc1) from Danio rerio (Zebrafish).